A 712-amino-acid chain; its full sequence is Polyadenylation factor subunit 2 (712 aa).

Positions 1–37 (MTAPTVPADQHGHPLPGPADPAANDTWRPSRYREPLH) are disordered. WD repeat units follow at residues 131-170 (KERS…YESI), 173-213 (VHDD…HGFQ), 214-253 (GHRE…EERS), 256-295 (GHGW…DLST), 298-337 (SSKS…ELEV), 340-380 (GHEK…PSTP), and 387-426 (AHED…GGQE). Disordered regions lie at residues 446-473 (TKRE…KQQV) and 489-712 (KTGP…DGRR). Gly residues-rich tracts occupy residues 460-469 (AGGGGGGGGD) and 494-504 (TTGGGPSGLPG). A compositionally biased stretch (low complexity) spans 533 to 545 (QGQAQGGQFPRGR). Basic and acidic residues predominate over residues 565 to 592 (FADRDRNGGGDRGGMDRDRDSRGGRQDP). Composition is skewed to pro residues over residues 603–612 (GGPPPGPPPG) and 619–671 (PPAP…PQGP). A compositionally biased stretch (gly residues) spans 678–712 (GGQGNYGASASGGYGQYGGGGGGGGGGGYGRDGRR).

The protein resides in the nucleus. Required for 3'-end cleavage and polyadenylation of pre-mRNAs. Also involved in chromosome segregation where it has a role in chromosome attachment to the mitotic spindle. The sequence is that of Polyadenylation factor subunit 2 (PFS2) from Cryptococcus neoformans var. neoformans serotype D (strain JEC21 / ATCC MYA-565) (Filobasidiella neoformans).